The sequence spans 93 residues: Small ribosomal subunit protein uS19 (93 aa).

Residues Met1–Asn23 form a disordered region. The span at Pro9–Asn23 shows a compositional bias: basic and acidic residues.

It belongs to the universal ribosomal protein uS19 family.

Functionally, protein S19 forms a complex with S13 that binds strongly to the 16S ribosomal RNA. The sequence is that of Small ribosomal subunit protein uS19 from Nocardioides sp. (strain ATCC BAA-499 / JS614).